We begin with the raw amino-acid sequence, 117 residues long: Anti-sigma F factor antagonist (117 aa).

Residues 3–113 enclose the STAS domain; that stretch reads LQIEMEHHRG…DNEVNALTEL (111 aa). Phosphoserine is present on Ser-58.

The protein belongs to the anti-sigma-factor antagonist family. Phosphorylated by SpoIIAB on a serine residue.

In the phosphorylated form it could act as an anti-anti-sigma factor that counteracts SpoIIAB and thus releases sigma f from inhibition. This Paenibacillus polymyxa (Bacillus polymyxa) protein is Anti-sigma F factor antagonist (spoIIAA).